We begin with the raw amino-acid sequence, 189 residues long: Putative manganese efflux pump MntP (189 aa).

Transmembrane regions (helical) follow at residues 3-23 (PVSL…AAIG), 41-61 (IIFG…GQAA), 65-85 (VADW…LHMI), 106-128 (WILA…GLAF), 141-161 (GLAT…LGAV), and 168-188 (MVGG…HLSA).

This sequence belongs to the MntP (TC 9.B.29) family.

It localises to the cell inner membrane. Its function is as follows. Probably functions as a manganese efflux pump. This is Putative manganese efflux pump MntP from Pseudomonas aeruginosa (strain UCBPP-PA14).